Reading from the N-terminus, the 277-residue chain is S-formylglutathione hydrolase FrmB (277 aa).

Active-site charge relay system residues include serine 145, aspartate 221, and histidine 254.

The protein belongs to the esterase D family.

The catalysed reaction is S-formylglutathione + H2O = formate + glutathione + H(+). Its function is as follows. Serine hydrolase involved in the detoxification of formaldehyde. Hydrolyzes S-formylglutathione to glutathione and formate. This Escherichia coli (strain SMS-3-5 / SECEC) protein is S-formylglutathione hydrolase FrmB (frmB).